Reading from the N-terminus, the 214-residue chain is Large ribosomal subunit protein eL14 (214 aa).

Residue lysine 79 is modified to N6-acetyllysine. N6-acetyllysine; alternate is present on lysine 85. Lysine 85 bears the N6-succinyllysine; alternate mark. Lysine 124 participates in a covalent cross-link: Glycyl lysine isopeptide (Lys-Gly) (interchain with G-Cter in SUMO2). Serine 139 is subject to Phosphoserine. Positions 161 to 214 (PAKKITTEGKKAPAQKAPAQKAAGQKAAPPPKTQKGQKAPSQKAPAPKASGKKA) are disordered. The 1-1; approximate repeat unit spans residues 170-174 (KKAPA). Positions 170–189 (KKAPAQKAPAQKAAGQKAAP) are 4 X 5 AA tandem repeats of Q-K-A-[APS]-X. Positions 172 to 214 (APAQKAPAQKAAGQKAAPPPKTQKGQKAPSQKAPAPKASGKKA) are enriched in low complexity. A run of 5 repeats spans residues 175-179 (QKAPA), 180-184 (QKAAG), 185-189 (QKAAP), 192-194 (KTQ), and 195-197 (KGQ). The segment at 192-197 (KTQKGQ) is 2 X 3 AA tandem repeats of K-G-Q. Lysine 203 is modified (N6-succinyllysine).

This sequence belongs to the eukaryotic ribosomal protein eL14 family. Component of the large ribosomal subunit.

It is found in the cytoplasm. Component of the large ribosomal subunit. The ribosome is a large ribonucleoprotein complex responsible for the synthesis of proteins in the cell. This chain is Large ribosomal subunit protein eL14 (RPL14), found in Bos taurus (Bovine).